The primary structure comprises 457 residues: Serine--tRNA ligase (457 aa).

252-254 is an L-serine binding site; it reads TAE. Residues 283–285 and V299 contribute to the ATP site; that span reads RKE. L-serine is bound at residue E306. Residue 370–373 participates in ATP binding; it reads EMVS. T406 lines the L-serine pocket.

The protein belongs to the class-II aminoacyl-tRNA synthetase family. Type-1 seryl-tRNA synthetase subfamily. Homodimer. The tRNA molecule binds across the dimer.

It localises to the cytoplasm. The enzyme catalyses tRNA(Ser) + L-serine + ATP = L-seryl-tRNA(Ser) + AMP + diphosphate + H(+). The catalysed reaction is tRNA(Sec) + L-serine + ATP = L-seryl-tRNA(Sec) + AMP + diphosphate + H(+). The protein operates within aminoacyl-tRNA biosynthesis; selenocysteinyl-tRNA(Sec) biosynthesis; L-seryl-tRNA(Sec) from L-serine and tRNA(Sec): step 1/1. In terms of biological role, catalyzes the attachment of serine to tRNA(Ser). Is also able to aminoacylate tRNA(Sec) with serine, to form the misacylated tRNA L-seryl-tRNA(Sec), which will be further converted into selenocysteinyl-tRNA(Sec). The protein is Serine--tRNA ligase of Saccharolobus islandicus (strain Y.G.57.14 / Yellowstone #1) (Sulfolobus islandicus).